A 394-amino-acid polypeptide reads, in one-letter code: Probable fatty acid methyltransferase (394 aa).

S-adenosyl-L-methionine is bound by residues 128-129, 163-171, and 189-194; these read YS, LLDVGCGWG, and TLSKEQ. The active site involves Cys-358.

Belongs to the CFA/CMAS family.

This is Probable fatty acid methyltransferase from Pseudomonas putida (Arthrobacter siderocapsulatus).